The chain runs to 896 residues: Microsomal triglyceride transfer protein large subunit (896 aa).

Positions Met-1–Gly-21 are cleaved as a signal peptide. The Vitellogenin domain maps to Leu-28 to Leu-659. A disulfide bond links Cys-174 and Cys-194.

As to quaternary structure, heterodimer; heterodimerizes with the protein disulfide isomerase (P4HB/PDI). Interacts with APOB. Interacts with PRAP1.

Its subcellular location is the endoplasmic reticulum. The protein localises to the golgi apparatus. It catalyses the reaction a 1,2-diacyl-sn-glycero-3-phosphocholine(in) = a 1,2-diacyl-sn-glycero-3-phosphocholine(out). The enzyme catalyses a 1,2-diacyl-sn-glycero-3-phosphoethanolamine(in) = a 1,2-diacyl-sn-glycero-3-phosphoethanolamine(out). It carries out the reaction a cholesterol ester(in) = a cholesterol ester(out). The catalysed reaction is a triacyl-sn-glycerol(in) = a triacyl-sn-glycerol(out). Catalyzes the transport of triglyceride, cholesteryl ester, and phospholipid between phospholipid surfaces. Required for the assembly and secretion of plasma lipoproteins that contain apolipoprotein B. May be involved in regulating cholesteryl ester biosynthesis in cells that produce lipoproteins. The chain is Microsomal triglyceride transfer protein large subunit (Mttp) from Rattus norvegicus (Rat).